Here is an 827-residue protein sequence, read N- to C-terminus: DNA ligase (827 aa).

NAD(+) contacts are provided by residues 45-49 (DAAYD), 94-95 (SL), and Glu-128. Lys-130 acts as the N6-AMP-lysine intermediate in catalysis. Residues Arg-151, Glu-188, Lys-304, and Lys-328 each contribute to the NAD(+) site. Zn(2+)-binding residues include Cys-451, Cys-454, Cys-475, and Cys-481. The region spanning 748–827 (AAAAAFSGRT…AEWLAMVEAA (80 aa)) is the BRCT domain.

Belongs to the NAD-dependent DNA ligase family. LigA subfamily. Mg(2+) is required as a cofactor. Mn(2+) serves as cofactor.

The catalysed reaction is NAD(+) + (deoxyribonucleotide)n-3'-hydroxyl + 5'-phospho-(deoxyribonucleotide)m = (deoxyribonucleotide)n+m + AMP + beta-nicotinamide D-nucleotide.. In terms of biological role, DNA ligase that catalyzes the formation of phosphodiester linkages between 5'-phosphoryl and 3'-hydroxyl groups in double-stranded DNA using NAD as a coenzyme and as the energy source for the reaction. It is essential for DNA replication and repair of damaged DNA. This is DNA ligase from Methylobacterium sp. (strain 4-46).